The following is a 305-amino-acid chain: Glycine--tRNA ligase alpha subunit (305 aa).

It belongs to the class-II aminoacyl-tRNA synthetase family. As to quaternary structure, tetramer of two alpha and two beta subunits.

The protein resides in the cytoplasm. The catalysed reaction is tRNA(Gly) + glycine + ATP = glycyl-tRNA(Gly) + AMP + diphosphate. The protein is Glycine--tRNA ligase alpha subunit of Streptococcus suis (strain 98HAH33).